Reading from the N-terminus, the 297-residue chain is Probable endonuclease 4 (297 aa).

Positions 1 to 21 (MPEIGAHVSAAGGPQRAPERG) are disordered. Positions 67, 107, 145, 179, 182, 216, 229, 231, and 261 each coordinate Zn(2+).

It belongs to the AP endonuclease 2 family. Requires Zn(2+) as cofactor.

The enzyme catalyses Endonucleolytic cleavage to 5'-phosphooligonucleotide end-products.. In terms of biological role, endonuclease IV plays a role in DNA repair. It cleaves phosphodiester bonds at apurinic or apyrimidinic (AP) sites, generating a 3'-hydroxyl group and a 5'-terminal sugar phosphate. The chain is Probable endonuclease 4 from Halorhodospira halophila (strain DSM 244 / SL1) (Ectothiorhodospira halophila (strain DSM 244 / SL1)).